Here is a 262-residue protein sequence, read N- to C-terminus: Ribosomal RNA small subunit methyltransferase A (262 aa).

The S-adenosyl-L-methionine site is built by Asn-14, Leu-16, Gly-41, Glu-62, Asp-87, and Asn-109.

The protein belongs to the class I-like SAM-binding methyltransferase superfamily. rRNA adenine N(6)-methyltransferase family. RsmA subfamily.

It localises to the cytoplasm. The enzyme catalyses adenosine(1518)/adenosine(1519) in 16S rRNA + 4 S-adenosyl-L-methionine = N(6)-dimethyladenosine(1518)/N(6)-dimethyladenosine(1519) in 16S rRNA + 4 S-adenosyl-L-homocysteine + 4 H(+). Functionally, specifically dimethylates two adjacent adenosines (A1518 and A1519) in the loop of a conserved hairpin near the 3'-end of 16S rRNA in the 30S particle. May play a critical role in biogenesis of 30S subunits. This chain is Ribosomal RNA small subunit methyltransferase A, found in Francisella tularensis subsp. tularensis (strain FSC 198).